A 68-amino-acid polypeptide reads, in one-letter code: TxMMSK-03 (68 aa).

A signal peptide spans 1–19 (MSKLGALLIICLLLFPLTA). Residues 20–50 (VPMDGDQPADRPAERMQDDISFEQHPMFDAT) constitute a propeptide that is removed on maturation. 3 cysteine pairs are disulfide-bonded: Cys53–Cys67, Cys54–Cys63, and Cys59–Cys66. Pro65 carries the post-translational modification 4-hydroxyproline; partial.

Contains 3 disulfide bonds. As to expression, expressed by the venom duct. Both hydroxylated and non-hydroxylated forms are mostly and only present in part 2 (proximal of the venom bulb) of the venom duct, respectively.

The protein resides in the secreted. The protein is TxMMSK-03 of Conus textile (Cloth-of-gold cone).